The sequence spans 224 residues: Ribonuclease HII (224 aa).

The 210-residue stretch at Met1 to Arg210 folds into the RNase H type-2 domain. Residues Asp7, Glu8, and Asp105 each contribute to the a divalent metal cation site.

Belongs to the RNase HII family. Mn(2+) is required as a cofactor. The cofactor is Mg(2+).

It localises to the cytoplasm. It catalyses the reaction Endonucleolytic cleavage to 5'-phosphomonoester.. Endonuclease that specifically degrades the RNA of RNA-DNA hybrids. This Pyrococcus abyssi (strain GE5 / Orsay) protein is Ribonuclease HII (rnhB).